Here is a 194-residue protein sequence, read N- to C-terminus: MMQAKSNIILASASPRRVELLSSAGIEFEVVAGDVDEGLLSGETPEDHVVRLARAKAEDVARKSGGRFYIGADTIVVCEGEIMGKPKDSADAERMLNKLSGIPHEVVTGFAVYDKERDGVITDAVRTRVYFKHLRDEEIRAYIATGCPFDKAGAYAIQGGAAYMVQKIEGSYSNVVGLPLCEVVDALRRMGAIE.

The active-site Proton acceptor is the Asp73.

The protein belongs to the Maf family. YhdE subfamily. Requires a divalent metal cation as cofactor.

The protein resides in the cytoplasm. It carries out the reaction dTTP + H2O = dTMP + diphosphate + H(+). It catalyses the reaction UTP + H2O = UMP + diphosphate + H(+). Its function is as follows. Nucleoside triphosphate pyrophosphatase that hydrolyzes dTTP and UTP. May have a dual role in cell division arrest and in preventing the incorporation of modified nucleotides into cellular nucleic acids. The sequence is that of dTTP/UTP pyrophosphatase from Geotalea uraniireducens (strain Rf4) (Geobacter uraniireducens).